The sequence spans 347 residues: Biotin synthase (347 aa).

One can recognise a Radical SAM core domain in the interval 40 to 258; sequence AQVQVSTLLS…IAVARIVMPR (219 aa). [4Fe-4S] cluster contacts are provided by C55, C59, and C62. [2Fe-2S] cluster contacts are provided by C99, C130, C190, and R262.

It belongs to the radical SAM superfamily. Biotin synthase family. As to quaternary structure, homodimer. It depends on [4Fe-4S] cluster as a cofactor. Requires [2Fe-2S] cluster as cofactor.

The enzyme catalyses (4R,5S)-dethiobiotin + (sulfur carrier)-SH + 2 reduced [2Fe-2S]-[ferredoxin] + 2 S-adenosyl-L-methionine = (sulfur carrier)-H + biotin + 2 5'-deoxyadenosine + 2 L-methionine + 2 oxidized [2Fe-2S]-[ferredoxin]. Its pathway is cofactor biosynthesis; biotin biosynthesis; biotin from 7,8-diaminononanoate: step 2/2. Functionally, catalyzes the conversion of dethiobiotin (DTB) to biotin by the insertion of a sulfur atom into dethiobiotin via a radical-based mechanism. The sequence is that of Biotin synthase from Stenotrophomonas maltophilia (strain R551-3).